We begin with the raw amino-acid sequence, 448 residues long: Histidinol dehydrogenase (448 aa).

3 residues coordinate NAD(+): Y136, Q197, and N220. Substrate is bound by residues S243, Q265, and H268. The Zn(2+) site is built by Q265 and H268. Active-site proton acceptor residues include E333 and H334. H334, D367, E421, and H426 together coordinate substrate. Residue D367 coordinates Zn(2+). H426 serves as a coordination point for Zn(2+).

It belongs to the histidinol dehydrogenase family. The cofactor is Zn(2+).

It catalyses the reaction L-histidinol + 2 NAD(+) + H2O = L-histidine + 2 NADH + 3 H(+). It functions in the pathway amino-acid biosynthesis; L-histidine biosynthesis; L-histidine from 5-phospho-alpha-D-ribose 1-diphosphate: step 9/9. In terms of biological role, catalyzes the sequential NAD-dependent oxidations of L-histidinol to L-histidinaldehyde and then to L-histidine. The protein is Histidinol dehydrogenase of Pseudomonas syringae pv. syringae (strain B728a).